A 365-amino-acid polypeptide reads, in one-letter code: uncharacterized protein (365 aa).

This is an uncharacterized protein from Archaeoglobus fulgidus (strain ATCC 49558 / DSM 4304 / JCM 9628 / NBRC 100126 / VC-16).